Consider the following 318-residue polypeptide: ATP phosphoribosyltransferase regulatory subunit (318 aa).

The protein belongs to the class-II aminoacyl-tRNA synthetase family. HisZ subfamily. Heteromultimer composed of HisG and HisZ subunits.

The protein resides in the cytoplasm. Its pathway is amino-acid biosynthesis; L-histidine biosynthesis; L-histidine from 5-phospho-alpha-D-ribose 1-diphosphate: step 1/9. In terms of biological role, required for the first step of histidine biosynthesis. May allow the feedback regulation of ATP phosphoribosyltransferase activity by histidine. The polypeptide is ATP phosphoribosyltransferase regulatory subunit (Lactococcus lactis subsp. cremoris (strain SK11)).